The primary structure comprises 310 residues: Low affinity immunoglobulin gamma Fc region receptor II-b (310 aa).

Positions 1–42 (MGILSFLPVLATESDWADCKSPQPWGHMLLWTAVLFLAPVAG) are cleaved as a signal peptide. The Extracellular portion of the chain corresponds to 43 to 217 (TPAAPPKAVL…KPVTITVQAP (175 aa)). 2 consecutive Ig-like C2-type domains span residues 48–127 (PKAV…VHLT) and 131–213 (EWLV…VTIT). 2 cysteine pairs are disulfide-bonded: Cys-71/Cys-113 and Cys-152/Cys-196. N-linked (GlcNAc...) asparagine glycans are attached at residues Asn-106, Asn-180, and Asn-187. Residues 218-240 (SSSPMGIIVAVVTGIAVAAIVAA) form a helical membrane-spanning segment. Residues 241-310 (VVALIYCRKK…LEEPDDQNRI (70 aa)) are Cytoplasmic-facing. The ITIM motif motif lies at 290–295 (ITYSLL). Tyr-292 bears the Phosphotyrosine; by SRC-type Tyr-kinases mark.

As to quaternary structure, interacts with INPP5D/SHIP1. Interacts with FGR. Interacts with LYN. (Microbial infection) Isoform IIB1 interacts with measles virus protein N. Protein N is released in the blood following lysis of measles infected cells. This interaction presumably block inflammatory immune response. In terms of processing, phosphorylated by the SRC-type Tyr-kinases LYN and BLK. As to expression, is the most broadly distributed Fc-gamma-receptor. Expressed in monocyte, neutrophils, macrophages, basophils, eosinophils, Langerhans cells, B-cells, platelets cells and placenta (endothelial cells). Not detected in natural killer cells.

The protein localises to the cell membrane. Functionally, receptor for the Fc region of complexed or aggregated immunoglobulins gamma. Low affinity receptor. Involved in a variety of effector and regulatory functions such as phagocytosis of immune complexes and modulation of antibody production by B-cells. Binding to this receptor results in down-modulation of previous state of cell activation triggered via antigen receptors on B-cells (BCR), T-cells (TCR) or via another Fc receptor. Isoform IIB1 fails to mediate endocytosis or phagocytosis. Isoform IIB2 does not trigger phagocytosis. The sequence is that of Low affinity immunoglobulin gamma Fc region receptor II-b (FCGR2B) from Homo sapiens (Human).